Here is a 122-residue protein sequence, read N- to C-terminus: MARIAGVNLPTNKRVIIALTYIHGIGRKTAVDIADKLGIDHGRRVQDLSDAEVLQIRETIDADHTVEGDLRRNTAMNIKRLMDLACYRGLRHRKGLPVRGQRTHTNARTRKGKAKPIAGKKK.

Positions 95-122 are disordered; it reads GLPVRGQRTHTNARTRKGKAKPIAGKKK.

Belongs to the universal ribosomal protein uS13 family. Part of the 30S ribosomal subunit. Forms a loose heterodimer with protein S19. Forms two bridges to the 50S subunit in the 70S ribosome.

Functionally, located at the top of the head of the 30S subunit, it contacts several helices of the 16S rRNA. In the 70S ribosome it contacts the 23S rRNA (bridge B1a) and protein L5 of the 50S subunit (bridge B1b), connecting the 2 subunits; these bridges are implicated in subunit movement. Contacts the tRNAs in the A and P-sites. The chain is Small ribosomal subunit protein uS13 from Sphingopyxis alaskensis (strain DSM 13593 / LMG 18877 / RB2256) (Sphingomonas alaskensis).